Reading from the N-terminus, the 717-residue chain is uncharacterized protein (717 aa).

It belongs to the asfivirus C717R family.

It is found in the virion. This is an uncharacterized protein from African swine fever virus (strain Badajoz 1971 Vero-adapted) (Ba71V).